We begin with the raw amino-acid sequence, 363 residues long: F-box protein At3g44326 (363 aa).

Residues 1-23 form a disordered region; that stretch reads MLSSSSSSTVEQPSRGGSPGINA. Positions 27–66 constitute an F-box domain; it reads DVLRSNILTRLDGSSLAALSCTCSNLNSFCSDESLWRQQC.

The polypeptide is F-box protein At3g44326 (Arabidopsis thaliana (Mouse-ear cress)).